The primary structure comprises 469 residues: Probable NADPH:adrenodoxin oxidoreductase, mitochondrial (469 aa).

The N-terminal 38 residues, 1–38 (MLSRFIKRTYSTQTSSPVVGIIGSGPAAFYTAHRLLRN), are a transit peptide targeting the mitochondrion. FAD-binding residues include Ala-27, Glu-48, Leu-56, and Val-92. NADP(+)-binding positions include 164-167 (HGNV), 208-209 (RR), and Glu-220. FAD-binding positions include Trp-375 and 382-384 (GVI). Gly-382 provides a ligand contact to NADP(+).

This sequence belongs to the ferredoxin--NADP reductase type 1 family. Requires FAD as cofactor.

It localises to the mitochondrion inner membrane. The catalysed reaction is 2 reduced [adrenodoxin] + NADP(+) + H(+) = 2 oxidized [adrenodoxin] + NADPH. Its function is as follows. Adrenodoxin reductase transfers electrons from NADPH to adrenodoxin, which is involved in heme A biosynthesis and in iron-sulfur cluster assembly. Involved in the electron transfer to heme A synthase etp1(cd), a heme protein that catalyzes the conversion of heme O to heme A. Required for the de novo synthesis of Fe-S clusters on iron sulfur cluster assembly protein isu1. Involved in electron delivery for Fe-S cluster synthesis. Essential for coenzyme Q biosynthesis. May be involved in the electron transfer required for the hydroxylation reaction performed by coq6. May play a role in cellular and mitochondrial iron homeostasis. This is Probable NADPH:adrenodoxin oxidoreductase, mitochondrial (arh1) from Schizosaccharomyces pombe (strain 972 / ATCC 24843) (Fission yeast).